The sequence spans 120 residues: NAD(P)H-quinone oxidoreductase subunit 3, chloroplastic (120 aa).

The next 3 helical transmembrane spans lie at 9–29 (IFWT…WISG), 64–84 (MFAL…PWAM), and 88–108 (VLGV…VVGL).

The protein belongs to the complex I subunit 3 family. As to quaternary structure, NDH is composed of at least 16 different subunits, 5 of which are encoded in the nucleus.

The protein localises to the plastid. The protein resides in the chloroplast thylakoid membrane. The catalysed reaction is a plastoquinone + NADH + (n+1) H(+)(in) = a plastoquinol + NAD(+) + n H(+)(out). It carries out the reaction a plastoquinone + NADPH + (n+1) H(+)(in) = a plastoquinol + NADP(+) + n H(+)(out). Functionally, NDH shuttles electrons from NAD(P)H:plastoquinone, via FMN and iron-sulfur (Fe-S) centers, to quinones in the photosynthetic chain and possibly in a chloroplast respiratory chain. The immediate electron acceptor for the enzyme in this species is believed to be plastoquinone. Couples the redox reaction to proton translocation, and thus conserves the redox energy in a proton gradient. The protein is NAD(P)H-quinone oxidoreductase subunit 3, chloroplastic of Brachypodium distachyon (Purple false brome).